A 237-amino-acid chain; its full sequence is UDP-Gal:alpha-D-GlcNAc-diphosphoundecaprenol beta-1,4-galactosyltransferase (237 aa).

Glu-101 serves as the catalytic Nucleophile.

The protein belongs to the glycosyltransferase 26 family. Mn(2+) serves as cofactor. Requires Ni(2+) as cofactor. Pb(2+) is required as a cofactor.

It carries out the reaction N-acetyl-alpha-D-glucosaminyl-di-trans,octa-cis-undecaprenyl diphosphate + UDP-alpha-D-galactose = beta-D-Gal-(1-&gt;4)-alpha-D-GlcNAc-di-trans,octa-cis-undecaprenyl diphosphate + UDP + H(+). The protein operates within bacterial outer membrane biogenesis; LPS O-antigen biosynthesis. In terms of biological role, galactosyltransferase that adds one galactose residue in the beta-1-4 linkage to GlcNAc-alpha-pyrophosphate-lipid in the biosynthesis of the O-polysaccharide repeating unit of the O antigen. This chain is UDP-Gal:alpha-D-GlcNAc-diphosphoundecaprenol beta-1,4-galactosyltransferase (wfeD), found in Shigella boydii.